The chain runs to 369 residues: Anthranilate phosphoribosyltransferase (369 aa).

5-phospho-alpha-D-ribose 1-diphosphate is bound by residues Gly-111, 114–115 (GD), Thr-119, 121–124 (NIST), 139–147 (KHGNRGVSS), and Ser-151. Gly-111 is a binding site for anthranilate. Position 123 (Ser-123) interacts with Mg(2+). Residue Asn-142 participates in anthranilate binding. Arg-197 contributes to the anthranilate binding site. Mg(2+)-binding residues include Asp-256 and Glu-257.

Belongs to the anthranilate phosphoribosyltransferase family. Homodimer. Mg(2+) is required as a cofactor.

It catalyses the reaction N-(5-phospho-beta-D-ribosyl)anthranilate + diphosphate = 5-phospho-alpha-D-ribose 1-diphosphate + anthranilate. Its pathway is amino-acid biosynthesis; L-tryptophan biosynthesis; L-tryptophan from chorismate: step 2/5. Catalyzes the transfer of the phosphoribosyl group of 5-phosphorylribose-1-pyrophosphate (PRPP) to anthranilate to yield N-(5'-phosphoribosyl)-anthranilate (PRA). The polypeptide is Anthranilate phosphoribosyltransferase (Cupriavidus pinatubonensis (strain JMP 134 / LMG 1197) (Cupriavidus necator (strain JMP 134))).